The primary structure comprises 157 residues: Serine-protein kinase RsbW (157 aa).

Belongs to the anti-sigma-factor family.

It carries out the reaction L-seryl-[protein] + ATP = O-phospho-L-seryl-[protein] + ADP + H(+). It catalyses the reaction L-threonyl-[protein] + ATP = O-phospho-L-threonyl-[protein] + ADP + H(+). Negative regulator of sigma-B activity. Phosphorylates and inactivates its specific antagonist protein, RsbV. Upon phosphorylation of RsbV, RsbW is released and binds to sigma-B, thereby blocking its ability to form an RNA polymerase holoenzyme (E-sigma-B). The chain is Serine-protein kinase RsbW from Listeria monocytogenes serotype 4b (strain CLIP80459).